Reading from the N-terminus, the 111-residue chain is Putative pterin-4-alpha-carbinolamine dehydratase (111 aa).

This sequence belongs to the pterin-4-alpha-carbinolamine dehydratase family.

It catalyses the reaction (4aS,6R)-4a-hydroxy-L-erythro-5,6,7,8-tetrahydrobiopterin = (6R)-L-erythro-6,7-dihydrobiopterin + H2O. The protein is Putative pterin-4-alpha-carbinolamine dehydratase of Marinobacter nauticus (strain ATCC 700491 / DSM 11845 / VT8) (Marinobacter aquaeolei).